The following is a 505-amino-acid chain: Photosystem II CP47 reaction center protein (505 aa).

Over 1–19 (GLPWYRVHTVLINDPGRLI) the chain is Cytoplasmic. Residues histidine 8, histidine 22, histidine 25, histidine 99, and histidine 113 each coordinate chlorophyll a. Residues 20–35 (AAHLMHTALVAGWAGS) traverse the membrane as a helical segment. At 36 to 99 (MALYELATFD…WSFEGVALAH (64 aa)) the chain is on the lumenal side. The chain crosses the membrane as a helical span at residues 100–114 (IVLSGLLFLAACWHW). Residues 115–138 (VYWDLELFRDPRTGEPALDLPKMF) are Cytoplasmic-facing. The chain crosses the membrane as a helical span at residues 139–155 (GIHLFLAGLLCFGFGAF). The chlorophyll a site is built by histidine 141, histidine 156, histidine 200, histidine 201, and histidine 215. The Lumenal segment spans residues 156–201 (HLTGLFGPGMWVSDPYGLTGSVQPVAPEWGPDGFNPYNPGGVVAHH). A helical membrane pass occupies residues 202 to 217 (IAAGIVGIIAGLFHIL). Over 218 to 235 (VRPPQRLYKALRMGNIET) the chain is Cytoplasmic. A helical transmembrane segment spans residues 236–251 (VLSSSIAAVFFAAFVV). Residues 252-455 (AGTMWYGSAT…PRGWFTFAHA (204 aa)) lie on the Lumenal side of the membrane. Chlorophyll a contacts are provided by histidine 454, histidine 465, and histidine 468. The helical transmembrane segment at 456 to 471 (VFALLFFFGHIWHGAR) threads the bilayer. At 472–505 (TLFRDVFSGIDPELSPEQVEWGFYQKVGDVTTRK) the chain is on the cytoplasmic side.

The protein belongs to the PsbB/PsbC family. PsbB subfamily. PSII is composed of 1 copy each of membrane proteins PsbA, PsbB, PsbC, PsbD, PsbE, PsbF, PsbH, PsbI, PsbJ, PsbK, PsbL, PsbM, PsbT, PsbX, PsbY, PsbZ, Psb30/Ycf12, peripheral proteins PsbO, CyanoQ (PsbQ), PsbU, PsbV and a large number of cofactors. It forms dimeric complexes. The cofactor is Binds multiple chlorophylls. PSII binds additional chlorophylls, carotenoids and specific lipids..

It localises to the cellular thylakoid membrane. Functionally, one of the components of the core complex of photosystem II (PSII). It binds chlorophyll and helps catalyze the primary light-induced photochemical processes of PSII. PSII is a light-driven water:plastoquinone oxidoreductase, using light energy to abstract electrons from H(2)O, generating O(2) and a proton gradient subsequently used for ATP formation. The polypeptide is Photosystem II CP47 reaction center protein (Thermostichus vulcanus (Synechococcus vulcanus)).